Reading from the N-terminus, the 831-residue chain is DNA polymerase I, thermostable (831 aa).

One can recognise a 5'-3' exonuclease domain in the interval 174–258 (RPEQWVDYRA…TDLPLEVDFG (85 aa)). Residues 409-831 (ERLFQTLKER…LGEDWLSAKE (423 aa)) form a polymerase region.

This sequence belongs to the DNA polymerase type-A family.

It carries out the reaction DNA(n) + a 2'-deoxyribonucleoside 5'-triphosphate = DNA(n+1) + diphosphate. In addition to polymerase activity, this DNA polymerase exhibits 5'-3' exonuclease activity. The protein is DNA polymerase I, thermostable (polA) of Thermus thermophilus.